The following is a 293-amino-acid chain: Exosome complex component RRP4 (293 aa).

The tract at residues 1–20 is disordered; the sequence is MALEMRLPKARKPLSESLGR. Positions 79 to 159 constitute an S1 motif domain; it reads EVGDIVVGRI…SDGAVSLHTR (81 aa). The residue at position 124 (Ser124) is a Phosphoserine.

It belongs to the RRP4 family. As to quaternary structure, component of the RNA exosome core complex (Exo-9), composed of EXOSC1, EXOSC2, EXOSC3, EXOSC4, EXOSC5, EXOSC6, EXOSC7, EXOSC8 and EXOSC9; within the complex interacts with EXOSC4 and EXOSC7. The catalytically inactive RNA exosome core complex (Exo-9) associates with the catalytic subunit EXOSC10/RRP6. Exo-9 may associate with DIS3 to form the nucleolar exosome complex, or DIS3L to form the cytoplasmic exosome complex. Exo-9 is formed by a hexameric base ring consisting of the heterodimers EXOSC4-EXOSC9, EXOSC5-EXOSC8 and EXOSC6-EXOSC7, and a cap ring consisting of EXOSC1, EXOSC2 and EXOSC3. The RNA exosome complex associates with cofactors C1D/RRP47, MPHOSPH6/MPP6 and MTREX/MTR4. Interacts with GTPBP1. Interacts with ZFP36L1 (via N-terminus).

It localises to the cytoplasm. It is found in the nucleus. Its subcellular location is the nucleolus. Functionally, non-catalytic component of the RNA exosome complex which has 3'-&gt;5' exoribonuclease activity and participates in a multitude of cellular RNA processing and degradation events. In the nucleus, the RNA exosome complex is involved in proper maturation of stable RNA species such as rRNA, snRNA and snoRNA, in the elimination of RNA processing by-products and non-coding 'pervasive' transcripts, such as antisense RNA species and promoter-upstream transcripts (PROMPTs), and of mRNAs with processing defects, thereby limiting or excluding their export to the cytoplasm. The RNA exosome may be involved in Ig class switch recombination (CSR) and/or Ig variable region somatic hypermutation (SHM) by targeting AICDA deamination activity to transcribed dsDNA substrates. In the cytoplasm, the RNA exosome complex is involved in general mRNA turnover and specifically degrades inherently unstable mRNAs containing AU-rich elements (AREs) within their 3' untranslated regions, and in RNA surveillance pathways, preventing translation of aberrant mRNAs. It seems to be involved in degradation of histone mRNA. The catalytic inactive RNA exosome core complex of 9 subunits (Exo-9) is proposed to play a pivotal role in the binding and presentation of RNA for ribonucleolysis, and to serve as a scaffold for the association with catalytic subunits and accessory proteins or complexes. EXOSC2 as peripheral part of the Exo-9 complex stabilizes the hexameric ring of RNase PH-domain subunits through contacts with EXOSC4 and EXOSC7. The chain is Exosome complex component RRP4 (Exosc2) from Mus musculus (Mouse).